Here is a 754-residue protein sequence, read N- to C-terminus: 5-methyltetrahydropteroyltriglutamate--homocysteine methyltransferase (754 aa).

5-methyltetrahydropteroyltri-L-glutamate-binding positions include Arg-17–Lys-20 and Lys-117. Residues Ile-431 to Ser-433 and Glu-484 each bind L-homocysteine. L-methionine-binding positions include Ile-431 to Ser-433 and Glu-484. 5-methyltetrahydropteroyltri-L-glutamate-binding positions include Arg-515–Cys-516 and Trp-561. Asp-599 serves as a coordination point for L-homocysteine. Position 599 (Asp-599) interacts with L-methionine. Glu-605 contacts 5-methyltetrahydropteroyltri-L-glutamate. Positions 641, 643, and 665 each coordinate Zn(2+). His-694 (proton donor) is an active-site residue. Cys-726 contacts Zn(2+).

This sequence belongs to the vitamin-B12 independent methionine synthase family. It depends on Zn(2+) as a cofactor.

The catalysed reaction is 5-methyltetrahydropteroyltri-L-glutamate + L-homocysteine = tetrahydropteroyltri-L-glutamate + L-methionine. It functions in the pathway amino-acid biosynthesis; L-methionine biosynthesis via de novo pathway; L-methionine from L-homocysteine (MetE route): step 1/1. Functionally, catalyzes the transfer of a methyl group from 5-methyltetrahydrofolate to homocysteine resulting in methionine formation. The polypeptide is 5-methyltetrahydropteroyltriglutamate--homocysteine methyltransferase (Salmonella choleraesuis (strain SC-B67)).